The following is a 123-amino-acid chain: Probable cytochrome c 2.2 (123 aa).

The segment at 1–21 (MGKKKSDTASGGAIPEGDNEK) is disordered. Heme c-binding residues include cysteine 30, cysteine 33, histidine 34, and methionine 95.

This sequence belongs to the cytochrome c family. In terms of processing, binds 1 heme c group covalently per subunit.

Its subcellular location is the mitochondrion intermembrane space. Electron carrier protein. The oxidized form of the cytochrome c heme group can accept an electron from the heme group of the cytochrome c1 subunit of cytochrome reductase. Cytochrome c then transfers this electron to the cytochrome oxidase complex, the final protein carrier in the mitochondrial electron-transport chain. In Caenorhabditis elegans, this protein is Probable cytochrome c 2.2 (cyc-2.2).